A 150-amino-acid chain; its full sequence is 3-dehydroquinate dehydratase (150 aa).

Tyr-26 serves as the catalytic Proton acceptor. Substrate is bound by residues Asn-77, His-83, and Asp-90. Residue His-103 is the Proton donor of the active site. Substrate-binding positions include 104–105 (LS) and Arg-114.

This sequence belongs to the type-II 3-dehydroquinase family. Homododecamer.

The enzyme catalyses 3-dehydroquinate = 3-dehydroshikimate + H2O. The protein operates within metabolic intermediate biosynthesis; chorismate biosynthesis; chorismate from D-erythrose 4-phosphate and phosphoenolpyruvate: step 3/7. Functionally, catalyzes a trans-dehydration via an enolate intermediate. This Yersinia enterocolitica serotype O:8 / biotype 1B (strain NCTC 13174 / 8081) protein is 3-dehydroquinate dehydratase.